Here is a 237-residue protein sequence, read N- to C-terminus: MSAKQNGFTFKQFHIDHHRCAMKVGTDGILLGAWADVSQSERILDLGTGTGLIALMLAQRSTKESEIHAVELDQAAYLQAQANVHASPWAQRVHVYQQDAAEFCRNAVNKFDLIVANPPYFPQGVDCATPQRDLARYTATHRHVDWLNWASHCLSEQGKISMVLPFEAGETLLKQTALYCIARCEVITKKGKAPQRLLLTFSLQAQPLQPSQLIIYDESNRYHPDFIGLTKDFYLAF.

It belongs to the methyltransferase superfamily. tRNA (adenine-N(6)-)-methyltransferase family.

The protein localises to the cytoplasm. The catalysed reaction is adenosine(37) in tRNA1(Val) + S-adenosyl-L-methionine = N(6)-methyladenosine(37) in tRNA1(Val) + S-adenosyl-L-homocysteine + H(+). Its function is as follows. Specifically methylates the adenine in position 37 of tRNA(1)(Val) (anticodon cmo5UAC). The polypeptide is tRNA1(Val) (adenine(37)-N6)-methyltransferase (Pasteurella multocida (strain Pm70)).